A 118-amino-acid polypeptide reads, in one-letter code: UPF0102 protein Franean1_1156 (118 aa).

This sequence belongs to the UPF0102 family.

This chain is UPF0102 protein Franean1_1156, found in Parafrankia sp. (strain EAN1pec).